A 341-amino-acid polypeptide reads, in one-letter code: Anthranilate phosphoribosyltransferase (341 aa).

5-phospho-alpha-D-ribose 1-diphosphate contacts are provided by residues glycine 79, 82–83 (GD), threonine 87, 89–92 (NIST), 107–115 (KHGNRSISS), and serine 119. Glycine 79 serves as a coordination point for anthranilate. Residue serine 91 participates in Mg(2+) binding. Asparagine 110 contacts anthranilate. Arginine 164 is an anthranilate binding site. The Mg(2+) site is built by aspartate 222 and glutamate 223.

The protein belongs to the anthranilate phosphoribosyltransferase family. Homodimer. Mg(2+) serves as cofactor.

It carries out the reaction N-(5-phospho-beta-D-ribosyl)anthranilate + diphosphate = 5-phospho-alpha-D-ribose 1-diphosphate + anthranilate. It functions in the pathway amino-acid biosynthesis; L-tryptophan biosynthesis; L-tryptophan from chorismate: step 2/5. Functionally, catalyzes the transfer of the phosphoribosyl group of 5-phosphorylribose-1-pyrophosphate (PRPP) to anthranilate to yield N-(5'-phosphoribosyl)-anthranilate (PRA). This Blochmanniella pennsylvanica (strain BPEN) protein is Anthranilate phosphoribosyltransferase.